Consider the following 413-residue polypeptide: MSKKDIKKVVLAYSGGLDTSIILKWLQDEYNAEVITFTADLGQGEEVEPARQKAIACGIKPENVFILDIKEEFVKDYVFPMFRANAIYEGEYLLGTSIARPLIAKKLVEIANQKGAEAVSHGATGKGNDQVRFELGALALNPDLKVIAPWREWTLNSRESLLEYAKKNGIEISQKHVDENGNPKISPYSMDANLLHISYEGLHLENPANEPEESMWLWTNSPEQAPDEAEYITIGYKNGDPISINGKELSPATLLKTLNDYGNKHGIGRVDIVENRYVGMKARGCYETPGGTIMLKAHRAIESLTLDREAAHLKDELMPRYAKLIYQGYWFSPEREMLQAAIDATQKNVEGTVRLKLYKGNVTVVGRESSKSLYDDAYSTFEKDEVYNQKDAEGFIRLNALRFIIAGKKNNKK.

Residues 12-20 (AYSGGLDTS) and Ala39 each bind ATP. Residues Tyr92 and Ser97 each contribute to the L-citrulline site. Residue Gly122 coordinates ATP. The L-aspartate site is built by Thr124, Asn128, and Asp129. An L-citrulline-binding site is contributed by Asn128. Residues Arg132, Ser189, Ser198, Glu274, and Tyr286 each contribute to the L-citrulline site.

This sequence belongs to the argininosuccinate synthase family. Type 1 subfamily. As to quaternary structure, homotetramer.

Its subcellular location is the cytoplasm. It carries out the reaction L-citrulline + L-aspartate + ATP = 2-(N(omega)-L-arginino)succinate + AMP + diphosphate + H(+). It functions in the pathway amino-acid biosynthesis; L-arginine biosynthesis; L-arginine from L-ornithine and carbamoyl phosphate: step 2/3. This Aliarcobacter butzleri (strain RM4018) (Arcobacter butzleri) protein is Argininosuccinate synthase.